Reading from the N-terminus, the 522-residue chain is Protein RCC2 (522 aa).

The segment at 1-83 (MPRKKAAAAA…TAGKAGGAAV (83 aa)) is disordered. Phosphoserine is present on Ser-16. The residue at position 20 (Thr-20) is a Phosphothreonine. A compositionally biased stretch (basic residues) spans 24–36 (GPRKRGGPAGRKR). Phosphoserine is present on residues Ser-43, Ser-44, Ser-45, Ser-46, Ser-50, and Ser-51. Residues 71 to 82 (RPATAGKAGGAA) are compositionally biased toward low complexity. Residues Lys-92 and Lys-124 each carry the N6-acetyllysine modification. RCC1 repeat units lie at residues 103–165 (KGQL…SLLI), 168–219 (EGKL…ALTE), 221–271 (GSVF…IMDC), 273–347 (GNLY…VLDS), 348–401 (QKRV…AVSE), 403–447 (GGLF…VAAD), and 448–501 (ESTI…VIAR). At Lys-293 the chain carries N6-acetyllysine. Residues 318-325 (KTKDGQIL) are required for interaction with RAC1. Residue Thr-342 is modified to Phosphothreonine. The residue at position 377 (Lys-377) is an N6-acetyllysine. Residues 502 to 515 (DESETEKEKIKKLP) show a composition bias toward basic and acidic residues. The interval 502–522 (DESETEKEKIKKLPEYNPRTL) is disordered.

Interacts with RAC1. Interacts with nucleotide-free and with GDP and GTP-bound forms of RAC1, with a slight preference for GDP-bound RAC1. Binds preferentially to the nucleotide-free form of RAC1. Interacts with CORO1C. Interacts with microtubules.

The protein resides in the nucleus. It is found in the nucleolus. The protein localises to the cytoplasm. It localises to the cytoskeleton. Its subcellular location is the chromosome. The protein resides in the centromere. It is found in the spindle. The protein localises to the midbody. It localises to the cell membrane. Its function is as follows. Multifunctional protein that may affect its functions by regulating the activity of small GTPases, such as RAC1 and RALA. Required for normal progress through the cell cycle, both during interphase and during mitosis. Required for the presence of normal levels of MAD2L1, AURKB and BIRC5 on inner centromeres during mitosis, and for normal attachment of kinetochores to mitotic spindles. Required for normal organization of the microtubule cytoskeleton in interphase cells. Functions as guanine nucleotide exchange factor (GEF) for RALA. Interferes with the activation of RAC1 by guanine nucleotide exchange factors. Prevents accumulation of active, GTP-bound RAC1, and suppresses RAC1-mediated reorganization of the actin cytoskeleton and formation of membrane protrusions. Required for normal cellular responses to contacts with the extracellular matrix of adjacent cells, and for directional cell migration in response to a fibronectin gradient (in vitro). The chain is Protein RCC2 (RCC2) from Homo sapiens (Human).